The sequence spans 474 residues: Dihydrolipoyl dehydrogenase (474 aa).

FAD contacts are provided by residues 39-47 (EKDAYGGTC), Lys-56, and Ala-118. A disulfide bridge connects residues Cys-47 and Cys-52. NAD(+) is bound by residues 186–190 (GGGYI), Glu-209, and 275–278 (AVGR). Residues Asp-318 and Ala-326 each coordinate FAD. The active-site Proton acceptor is the His-450.

This sequence belongs to the class-I pyridine nucleotide-disulfide oxidoreductase family. Homodimer. FAD is required as a cofactor.

The protein localises to the cytoplasm. It catalyses the reaction N(6)-[(R)-dihydrolipoyl]-L-lysyl-[protein] + NAD(+) = N(6)-[(R)-lipoyl]-L-lysyl-[protein] + NADH + H(+). This Halobacterium salinarum (strain ATCC 700922 / JCM 11081 / NRC-1) (Halobacterium halobium) protein is Dihydrolipoyl dehydrogenase (lpdA).